A 505-amino-acid chain; its full sequence is ATP synthase subunit alpha (505 aa).

ATP is bound at residue 170-177 (GDRQTGKT).

It belongs to the ATPase alpha/beta chains family. In terms of assembly, F-type ATPases have 2 components, CF(1) - the catalytic core - and CF(0) - the membrane proton channel. CF(1) has five subunits: alpha(3), beta(3), gamma(1), delta(1), epsilon(1). CF(0) has four main subunits: a(1), b(1), b'(1) and c(9-12).

Its subcellular location is the cellular thylakoid membrane. It catalyses the reaction ATP + H2O + 4 H(+)(in) = ADP + phosphate + 5 H(+)(out). Produces ATP from ADP in the presence of a proton gradient across the membrane. The alpha chain is a regulatory subunit. The sequence is that of ATP synthase subunit alpha from Synechococcus elongatus (strain ATCC 33912 / PCC 7942 / FACHB-805) (Anacystis nidulans R2).